The following is a 20-amino-acid chain: FLGGLMKAFPALICAVTKKC.

Cys-14 and Cys-20 form a disulfide bridge.

Expressed by the skin glands.

The protein localises to the secreted. Antibacterial activity against Gram-positive bacterium S.aureus (MIC=17 uM) and Gram-negative bacterium E.coli (MIC=4 uM). Has activity against C.albicans (MIC=14 uM). The polypeptide is Ranalexin-1Ca (Lithobates clamitans (Green frog)).